The sequence spans 280 residues: Transmembrane protein 119 (280 aa).

An N-terminal signal peptide occupies residues 1–20 (MVPWFLLSLLLLARPVPGVA). Over 21–91 (YSVSLPASFL…IMDFFRQYVM (71 aa)) the chain is Extracellular. An O-linked (Xyl...) (chondroitin sulfate) serine glycan is attached at serine 36. Low complexity predominate over residues 38-47 (EAEGSSASSP). The segment at 38–73 (EAEGSSASSPSLPPPGTPAFSPTPERPQPTALDGPV) is disordered. A helical membrane pass occupies residues 92–112 (LIAVVGSLTFLIMFIVCAALI). The Cytoplasmic portion of the chain corresponds to 113 to 280 (TRQKHKATAY…CACNRVSPSV (168 aa)). Disordered regions lie at residues 133–162 (VDQR…EGLD) and 181–280 (PARA…SPSV). A compositionally biased stretch (basic and acidic residues) spans 148–162 (VPDRAPDSRHEEGLD). Phosphoserine is present on serine 269.

As to quaternary structure, interacts with SMAD1, SMAD5 and RUNX2. In terms of tissue distribution, expressed in spermatocytes and spermatids in the developing testis (at protein level). Expressed in the brain, heart, lung, spleen, skeletal muscle, ovary, testis and epididymis. Predominantly expressed in osteoblasts.

The protein localises to the cell membrane. The protein resides in the cytoplasm. Its subcellular location is the endoplasmic reticulum membrane. It is found in the secreted. Functionally, plays an important role in bone formation and normal bone mineralization. Promotes the differentiation of myoblasts into osteoblasts. May induce the commitment and differentiation of myoblasts into osteoblasts through an enhancement of BMP2 production and interaction with the BMP-RUNX2 pathway. Up-regulates the expression of ATF4 which plays a central role in osteoblast differentiation. Essential for normal spermatogenesis and late testicular differentiation. The sequence is that of Transmembrane protein 119 (Tmem119) from Mus musculus (Mouse).